A 142-amino-acid chain; its full sequence is Large-conductance mechanosensitive channel (142 aa).

The next 3 helical transmembrane spans lie at 14–34 (VMDL…VDSV), 38–58 (LVMP…NYFL), and 82–102 (GNFI…FLLI).

The protein belongs to the MscL family. As to quaternary structure, homopentamer.

The protein localises to the cell inner membrane. Channel that opens in response to stretch forces in the membrane lipid bilayer. May participate in the regulation of osmotic pressure changes within the cell. This Rhizobium meliloti (strain 1021) (Ensifer meliloti) protein is Large-conductance mechanosensitive channel.